Here is a 335-residue protein sequence, read N- to C-terminus: Fructose-1,6-bisphosphatase class 1 (335 aa).

Glu-92, Asp-114, Leu-116, and Asp-117 together coordinate Mg(2+). Substrate contacts are provided by residues 117–120 (DGSS), Asn-209, and Lys-275. Residue Glu-281 participates in Mg(2+) binding.

Belongs to the FBPase class 1 family. As to quaternary structure, homotetramer. Requires Mg(2+) as cofactor.

The protein localises to the cytoplasm. The enzyme catalyses beta-D-fructose 1,6-bisphosphate + H2O = beta-D-fructose 6-phosphate + phosphate. It functions in the pathway carbohydrate biosynthesis; gluconeogenesis. This chain is Fructose-1,6-bisphosphatase class 1, found in Polaromonas sp. (strain JS666 / ATCC BAA-500).